A 507-amino-acid chain; its full sequence is Solute carrier family 2, facilitated glucose transporter member 6 (507 aa).

Residues 1 to 28 (MQEPLLGAEGPDYDTFPEKPPPSPGDRA) are disordered. Residues 1–37 (MQEPLLGAEGPDYDTFPEKPPPSPGDRARVGTLQNKR) are Cytoplasmic-facing. Residues 5 to 6 (LL) carry the Dileucine internalization motif motif. S23 carries the phosphoserine modification. A helical membrane pass occupies residues 38–58 (VFLATFAAVLGNFSFGYALVY). The Extracellular segment spans residues 59–81 (TSPVIPALERSLDPDLHLTKSQA). Residues 82 to 102 (SWFGSVFTLGAAAGGLSAMIL) form a helical membrane-spanning segment. The Cytoplasmic portion of the chain corresponds to 103–111 (NDLLGRKLS). Residues 112–132 (IMFSAVPSAAGYALMAGAHGL) form a helical membrane-spanning segment. Residues 133–140 (WMLLLGRT) lie on the Extracellular side of the membrane. A helical membrane pass occupies residues 141-161 (LTGFAGGLTAACIPVYVSEIA). Topologically, residues 162–168 (PPGVRGA) are cytoplasmic. Residues 169-189 (LGATPQLMAVFGSLSLYALGL) form a helical membrane-spanning segment. Q174 provides a ligand contact to a D-hexose. Residues 190 to 194 (LLPWR) lie on the Extracellular side of the membrane. The chain crosses the membrane as a helical span at residues 195–215 (WLAVAGEAPVLIMILLLSFMP). Topologically, residues 216-289 (NSPRFLLSRG…LLMRLLQQLT (74 aa)) are cytoplasmic. A D-hexose is bound at residue 286 to 287 (QQ). Residues 290 to 310 (GITPILVYLQSIFDSTAVLLP) form a helical membrane-spanning segment. The Extracellular segment spans residues 311 to 314 (PKDD). Residues 315–335 (AAIVGAVRLLSVLIAALTMDL) form a helical membrane-spanning segment. Residues 336–339 (AGRK) are Cytoplasmic-facing. A helical transmembrane segment spans residues 340-360 (VLLFVSAAIMFAANLTLGLYI). Residues 361–395 (HFGPRPLSPNSTAGLESESWGDLAQPLAAPAGYLT) lie on the Extracellular side of the membrane. The N-linked (GlcNAc...) asparagine glycan is linked to N370. A helical membrane pass occupies residues 396–416 (LVPLLATMLFIMGYAVGWGPI). At 417 to 435 (TWLLMSEVLPLRARGVASG) the chain is on the cytoplasmic side. Residue W418 participates in a D-hexose binding. A helical membrane pass occupies residues 436 to 456 (LCVLASWLTAFVLTKSFLPVV). At 457–462 (STFGLQ) the chain is on the extracellular side. Residues 463 to 483 (VPFFFFAAICLVSLVFTGCCV) form a helical membrane-spanning segment. At 484-507 (PETKGRSLEQIESFFRTGRRSFLR) the chain is on the cytoplasmic side.

Belongs to the major facilitator superfamily. Sugar transporter (TC 2.A.1.1) family. Glucose transporter subfamily. Highly expressed in brain, spleen and peripheral blood leukocytes.

The protein resides in the lysosome membrane. Probable sugar transporter that acts as a regulator of glycolysis in macrophages. Does not transport glucose. This is Solute carrier family 2, facilitated glucose transporter member 6 from Homo sapiens (Human).